The following is a 296-amino-acid chain: Aquaporin PIP1-6 (296 aa).

The next 2 helical transmembrane spans lie at 63–83 (IAEF…VMGV) and 98–120 (IAWA…SGGH). Positions 122–124 (NPA) match the NPA 1 motif. The next 3 membrane-spanning stretches (helical) occupy residues 141–161 (VYYV…VKAF), 183–203 (GDGL…VFSA), and 217–237 (ALAP…TIPI). Residues 243–245 (NPA) carry the NPA 2 motif. Residues 265 to 285 (IFWVGPFAGAALAAVYHQVVL) traverse the membrane as a helical segment.

This sequence belongs to the MIP/aquaporin (TC 1.A.8) family. PIP (TC 1.A.8.11) subfamily.

It localises to the cell membrane. Aquaporins facilitate the transport of water and small neutral solutes across cell membranes. The chain is Aquaporin PIP1-6 (PIP1-6) from Zea mays (Maize).